We begin with the raw amino-acid sequence, 460 residues long: MTCQVTQKAREGTINPIFTCQPAGAQFASIGIKDCIGIVHGGQGCVMFVRLLISQHMKESFEIASSSVHEDGAVFGALDRVETAVEVLLTRYPDVKVVPIITTCSTEIIGDDVDGLLSKLEDELLPTKFPGREVHLLTVHCPSFVGSMITGYDKAVHDFVKKFATKDEPSDKINLITGWVNPGDVKELKHLLEVMEVKANVLFEVESFDSPLMPDLEHHSHGSTTIEDLRDTANAKGTIALNRYEGMKAADYLKKKFKVPAVIGPTPVGIRNTDAFLKAVSEMTGQPIPAQLVKERGLALDAIADIGHMFLADKRVAIYANPDLAIGLTEFCLDLEMKPKLLLLGDDNSGYVKDPRVVALQENAPDLEIVTNADFWDLESRIQQGLELDLILGHSKGRFISIDYKVPMVRVGFPTYDRAGMYRHPVLGYGGAMFLAETMANTLFADMEAKKNKEWILNVW.

The [8Fe-7S] cluster site is built by cysteine 20, cysteine 45, cysteine 104, and serine 143.

Belongs to the NifD/NifK/NifE/NifN family. Hexamer of two alpha, two beta, and two delta chains. It depends on [8Fe-7S] cluster as a cofactor.

The enzyme catalyses N2 + 8 reduced [2Fe-2S]-[ferredoxin] + 16 ATP + 16 H2O = H2 + 8 oxidized [2Fe-2S]-[ferredoxin] + 2 NH4(+) + 16 ADP + 16 phosphate + 6 H(+). Functionally, this iron-iron protein is part of the nitrogenase complex that catalyzes the key enzymatic reactions in nitrogen fixation. Other nitrogenase complexes utilize a molybdenum-iron protein or a vanadium-iron protein. This is Nitrogenase iron-iron protein beta chain (anfK) from Rhodobacter capsulatus (Rhodopseudomonas capsulata).